The sequence spans 227 residues: Ribose-5-phosphate isomerase A (227 aa).

Substrate-binding positions include 26-29 (TGST), 82-85 (DGAD), and 95-98 (KGGG). Catalysis depends on Glu-104, which acts as the Proton acceptor. Lys-122 contacts substrate.

The protein belongs to the ribose 5-phosphate isomerase family. Homodimer.

It carries out the reaction aldehydo-D-ribose 5-phosphate = D-ribulose 5-phosphate. The protein operates within carbohydrate degradation; pentose phosphate pathway; D-ribose 5-phosphate from D-ribulose 5-phosphate (non-oxidative stage): step 1/1. In terms of biological role, catalyzes the reversible conversion of ribose-5-phosphate to ribulose 5-phosphate. In Streptococcus pyogenes serotype M5 (strain Manfredo), this protein is Ribose-5-phosphate isomerase A.